We begin with the raw amino-acid sequence, 244 residues long: MDKSELVQKAKLSEQAERYDDMAASMKAVTELGAELSNEERNLLSVAYKNVVGARRSSWRVISSIEQKTEGNDKRQQMAREYREKVETELQDICKDVLGLLDKYLVPNATPPESKVFYLKMKGDYYRYLSEVASGDSKQETVTCSQQAYQEAFEISKSEMQPTHPIRLGLALNFSVFYYEILNSPEKACSLAKSAFDEAIAELDTLNEESYKDSTLIMQLLRDNLTLWTSENQGEEADNAEADN.

Methionine 1 is subject to N-acetylmethionine.

The protein belongs to the 14-3-3 family. As to quaternary structure, homodimer, and heterodimer with other family members.

The protein resides in the cytoplasm. Its function is as follows. Adapter protein implicated in the regulation of a large spectrum of both general and specialized signaling pathways. Binds to a large number of partners, usually by recognition of a phosphoserine or phosphothreonine motif. Binding generally results in the modulation of the activity of the binding partner. In Xenopus tropicalis (Western clawed frog), this protein is 14-3-3 protein beta/alpha (ywhab).